The chain runs to 319 residues: MKKSITTLDLNLLLCLQLLMQERSVTKAAKRINVTPSAVSKSLAKLRAWFDDPLFVNSPLGLSPTPLMVSMEQNLAEWMQMSNLLLDKPHHQTPRGLKFELAAESPLMMIMLNALSKQIYQRYPQATIKLRNWDYDSLDAITRGEVDIGFSGRESHPRSRELLSSLPLAIDYEVLFSDVPCVWLRKDHPALHQTWNLDTFLRYPHISICWEQSDTWALDNVLQELGRERTIAMSLPEFEQSLFMAAQPDNLLLATAPRYCQYYNQLHQLPLVALPLPFDESQQKKLEVPFTLLWHKRNSHNPKIVWLRETIKNLYASMA.

Residues 8–65 enclose the HTH lysR-type domain; it reads LDLNLLLCLQLLMQERSVTKAAKRINVTPSAVSKSLAKLRAWFDDPLFVNSPLGLSPT. A DNA-binding region (H-T-H motif) is located at residues 25–44; it reads VTKAAKRINVTPSAVSKSLA.

This sequence belongs to the LysR transcriptional regulatory family.

Its function is as follows. Involved in anaerobic NO protection. This chain is HTH-type transcriptional regulator YidZ, found in Escherichia coli (strain K12 / MC4100 / BW2952).